A 379-amino-acid chain; its full sequence is Histidinol-phosphate aminotransferase (379 aa).

An N6-(pyridoxal phosphate)lysine modification is found at Lys236.

The protein belongs to the class-II pyridoxal-phosphate-dependent aminotransferase family. Histidinol-phosphate aminotransferase subfamily. Homodimer. It depends on pyridoxal 5'-phosphate as a cofactor.

The catalysed reaction is L-histidinol phosphate + 2-oxoglutarate = 3-(imidazol-4-yl)-2-oxopropyl phosphate + L-glutamate. The protein operates within amino-acid biosynthesis; L-histidine biosynthesis; L-histidine from 5-phospho-alpha-D-ribose 1-diphosphate: step 7/9. The chain is Histidinol-phosphate aminotransferase from Desulfotalea psychrophila (strain LSv54 / DSM 12343).